We begin with the raw amino-acid sequence, 103 residues long: Ghrelin (103 aa).

An N-terminal signal peptide occupies residues Met1–Gly26. Residues Gly27 to Ala51 are disordered. The O-decanoyl serine; alternate moiety is linked to residue Ser29. Ser29 carries O-hexanoyl serine; alternate lipidation. Ser29 carries the O-octanoyl serine; alternate lipid modification. A Glutamine amide modification is found at Gln38. At Met45 the chain carries Methionine amide. A propeptide spans Asp49–Phe103 (removed in mature form).

The protein belongs to the motilin family. O-octanoylated by GOAT/MBOAT4. O-octanoylation or O-decanoylation is essential for activity. The O-decanoylated form differs in the length of the carbon backbone of the carboxylic acid forming an ester bond with Ser-29. In terms of tissue distribution, expressed in the telencephalon, hypothalamus, pituitary, intestine, liver, spleen and gill, with expression strongest in the intestine.

The protein localises to the secreted. Ligand for growth hormone secretagogue receptor type 1 (GHSR). Induces the release of growth hormone from the pituitary. Induces adiposity and stimulates gastric acid secretion. Involved in growth regulation. Has an appetite-stimulating effect. The protein is Ghrelin (ghrl) of Carassius auratus (Goldfish).